The chain runs to 77 residues: Conotoxin Bt6.6 (77 aa).

A signal peptide spans 1–19 (MEKLTILLLVAAVLMSTQA). The propeptide occupies 20 to 38 (LIQSDGEKRQQAKINFLSX). 3 disulfides stabilise this stretch: Cys51-Cys65, Cys58-Cys69, and Cys64-Cys74.

Belongs to the conotoxin O2 superfamily. As to expression, expressed by the venom duct.

The protein resides in the secreted. This is Conotoxin Bt6.6 from Conus betulinus (Beech cone).